We begin with the raw amino-acid sequence, 154 residues long: Protein X (154 aa).

Positions 68-117 are mitochondrial targeting sequence; sequence PCALRFTSARRMETTVNAHQILPKVLHKRTLGLSAMSTTDLEAYFKDCLF.

It belongs to the orthohepadnavirus protein X family. May form homodimer. May interact with host CEBPA, CFLAR, CREB1, DDB1, E4F1, HBXIP, HSPD1/HSP60, NFKBIA, POLR2E and SMAD4. Interacts with host SMC5-SMC6 complex and induces its degradation. Interacts with host TRPC4AP; leading to prevent ubiquitination of TRPC4AP. Interacts with host PLSCR1; this interaction promotes ubiquitination and degradation of HBx and impairs HBx-mediated cell proliferation. In terms of processing, a fraction may be phosphorylated in insect cells and HepG2 cells, a human hepatoblastoma cell line. Phosphorylated in vitro by host protein kinase C or mitogen-activated protein kinase. N-acetylated in insect cells.

The protein resides in the host cytoplasm. It localises to the host nucleus. Its subcellular location is the host mitochondrion. Its function is as follows. Multifunctional protein that plays a role in silencing host antiviral defenses and promoting viral transcription. Does not seem to be essential for HBV infection. May be directly involved in development of cirrhosis and liver cancer (hepatocellular carcinoma). Most of cytosolic activities involve modulation of cytosolic calcium. The effect on apoptosis is controversial depending on the cell types in which the studies have been conducted. May induce apoptosis by localizing in mitochondria and causing loss of mitochondrial membrane potential. May also modulate apoptosis by binding host CFLAR, a key regulator of the death-inducing signaling complex (DISC). Promotes viral transcription by using the host E3 ubiquitin ligase DDB1 to target the SMC5-SMC6 complex to proteasomal degradation. This host complex would otherwise bind to viral episomal DNA, and prevents its transcription. Moderately stimulates transcription of many different viral and cellular transcription elements. Promoters and enhancers stimulated by HBx contain DNA binding sites for NF-kappa-B, AP-1, AP-2, c-EBP, ATF/CREB, or the calcium-activated factor NF-AT. In Hepatitis B virus genotype D subtype ayw (isolate France/Tiollais/1979) (HBV-D), this protein is Protein X.